A 380-amino-acid chain; its full sequence is Cytochrome b (380 aa).

4 helical membrane passes run 34–54 (FGSLLGICLATQILTGLLLAM), 78–99 (WLIRNLHANGASFFFICIYLHI), 114–134 (WNTGILLLLTLMATAFVGYVL), and 179–199 (FFALHFLLPFVIAGLTLIHLT). The heme b site is built by histidine 84 and histidine 98. Heme b contacts are provided by histidine 183 and histidine 197. Histidine 202 contributes to the a ubiquinone binding site. Transmembrane regions (helical) follow at residues 227–247 (LKDILGFMLMFLSLTTLALFS), 289–309 (LGGVLALAASVLMMFLSPLLH), 321–341 (LSQLLFWTLVANLFILTWVGS), and 348–368 (FIIIGQLASFTYFTILLILLP).

It belongs to the cytochrome b family. As to quaternary structure, the cytochrome bc1 complex contains 11 subunits: 3 respiratory subunits (MT-CYB, CYC1 and UQCRFS1), 2 core proteins (UQCRC1 and UQCRC2) and 6 low-molecular weight proteins (UQCRH/QCR6, UQCRB/QCR7, UQCRQ/QCR8, UQCR10/QCR9, UQCR11/QCR10 and a cleavage product of UQCRFS1). This cytochrome bc1 complex then forms a dimer. Heme b is required as a cofactor.

It is found in the mitochondrion inner membrane. Its function is as follows. Component of the ubiquinol-cytochrome c reductase complex (complex III or cytochrome b-c1 complex) that is part of the mitochondrial respiratory chain. The b-c1 complex mediates electron transfer from ubiquinol to cytochrome c. Contributes to the generation of a proton gradient across the mitochondrial membrane that is then used for ATP synthesis. The sequence is that of Cytochrome b (MT-CYB) from Pelagodroma marina (White-faced storm-petrel).